A 92-amino-acid polypeptide reads, in one-letter code: Small ribosomal subunit protein uS19c (92 aa).

The protein belongs to the universal ribosomal protein uS19 family.

It localises to the plastid. Its subcellular location is the chloroplast. Protein S19 forms a complex with S13 that binds strongly to the 16S ribosomal RNA. This is Small ribosomal subunit protein uS19c from Oltmannsiellopsis viridis (Marine flagellate).